The primary structure comprises 142 residues: uncharacterized protein (142 aa).

2 helical membrane-spanning segments follow: residues 12–29 (NAIL…YGLL) and 44–66 (IYGQ…GVTA).

It is found in the cell membrane. This is an uncharacterized protein from Archaeoglobus fulgidus (strain ATCC 49558 / DSM 4304 / JCM 9628 / NBRC 100126 / VC-16).